A 243-amino-acid polypeptide reads, in one-letter code: Carboxy-S-adenosyl-L-methionine synthase (243 aa).

Residues tyrosine 40, glycine 65–serine 67, aspartate 90–asparagine 91, aspartate 118–isoleucine 119, asparagine 133, and arginine 200 each bind S-adenosyl-L-methionine.

It belongs to the class I-like SAM-binding methyltransferase superfamily. Cx-SAM synthase family. As to quaternary structure, homodimer.

It carries out the reaction prephenate + S-adenosyl-L-methionine = carboxy-S-adenosyl-L-methionine + 3-phenylpyruvate + H2O. Catalyzes the conversion of S-adenosyl-L-methionine (SAM) to carboxy-S-adenosyl-L-methionine (Cx-SAM). The chain is Carboxy-S-adenosyl-L-methionine synthase from Shewanella frigidimarina (strain NCIMB 400).